Consider the following 85-residue polypeptide: 4-hydroxyphenylacetate decarboxylase small subunit (85 aa).

H4, C7, C20, C34, C43, C46, C60, and C78 together coordinate [4Fe-4S] cluster.

This sequence belongs to the HPA decarboxylase small subunit family. In terms of assembly, heterooctamer consisting of 4 large (HpdB) subunits and 4 small (HpdC) subunits, arranged as a tetramer of heterodimers. The cofactor is [4Fe-4S] cluster.

It catalyses the reaction 4-hydroxyphenylacetate + H(+) = 4-methylphenol + CO2. The catalysed reaction is 3,4-dihydroxyphenylacetate + H(+) = 4-methylcatechol + CO2. Component of the HPA decarboxylase that decarboxylates phenylacetates with a hydroxyl group in the p-position. Active toward 4-hydroxyphenylacetate and 3,4-dihydroxyphenylacetate, forming 4-methylphenol and 4-methylcatechol, respectively. Is likely involved in the catabolism of aromatic amino acids such as tyrosine fermentation. 4-methylphenol (p-cresol) formation provides metabolic toxicity, which allows an active suppression of other microbes and may provide growth advantages for the producers in highly competitive environments. The small subunit is essential for enzymatic activity of HPA decarboxylase, and also seems to be involved in the regulation of the enzyme oligomeric state and catalytic activity. The protein is 4-hydroxyphenylacetate decarboxylase small subunit of Clostridioides difficile (strain CD196) (Peptoclostridium difficile).